Reading from the N-terminus, the 359-residue chain is Protein RecA (359 aa).

An ATP-binding site is contributed by 73 to 80 (GPESSGKT).

This sequence belongs to the RecA family.

The protein resides in the cytoplasm. Functionally, can catalyze the hydrolysis of ATP in the presence of single-stranded DNA, the ATP-dependent uptake of single-stranded DNA by duplex DNA, and the ATP-dependent hybridization of homologous single-stranded DNAs. It interacts with LexA causing its activation and leading to its autocatalytic cleavage. This Desulfovibrio desulfuricans (strain ATCC 27774 / DSM 6949 / MB) protein is Protein RecA.